Consider the following 145-residue polypeptide: SsrA-binding protein (145 aa).

It belongs to the SmpB family.

Its subcellular location is the cytoplasm. Required for rescue of stalled ribosomes mediated by trans-translation. Binds to transfer-messenger RNA (tmRNA), required for stable association of tmRNA with ribosomes. tmRNA and SmpB together mimic tRNA shape, replacing the anticodon stem-loop with SmpB. tmRNA is encoded by the ssrA gene; the 2 termini fold to resemble tRNA(Ala) and it encodes a 'tag peptide', a short internal open reading frame. During trans-translation Ala-aminoacylated tmRNA acts like a tRNA, entering the A-site of stalled ribosomes, displacing the stalled mRNA. The ribosome then switches to translate the ORF on the tmRNA; the nascent peptide is terminated with the 'tag peptide' encoded by the tmRNA and targeted for degradation. The ribosome is freed to recommence translation, which seems to be the essential function of trans-translation. The protein is SsrA-binding protein of Mesomycoplasma hyopneumoniae (strain 232) (Mycoplasma hyopneumoniae).